The chain runs to 222 residues: Sugar fermentation stimulation protein homolog (222 aa).

Belongs to the SfsA family.

This Thermotoga sp. (strain RQ2) protein is Sugar fermentation stimulation protein homolog.